Reading from the N-terminus, the 251-residue chain is Demethylmenaquinone methyltransferase (251 aa).

Residues T66, D87, and 115–116 (NA) each bind S-adenosyl-L-methionine.

It belongs to the class I-like SAM-binding methyltransferase superfamily. MenG/UbiE family.

It catalyses the reaction a 2-demethylmenaquinol + S-adenosyl-L-methionine = a menaquinol + S-adenosyl-L-homocysteine + H(+). It functions in the pathway quinol/quinone metabolism; menaquinone biosynthesis; menaquinol from 1,4-dihydroxy-2-naphthoate: step 2/2. Functionally, methyltransferase required for the conversion of demethylmenaquinol (DMKH2) to menaquinol (MKH2). The polypeptide is Demethylmenaquinone methyltransferase (Symbiobacterium thermophilum (strain DSM 24528 / JCM 14929 / IAM 14863 / T)).